The following is a 499-amino-acid chain: Lysine--tRNA ligase (499 aa).

Mg(2+) contacts are provided by Glu-407 and Glu-414.

This sequence belongs to the class-II aminoacyl-tRNA synthetase family. As to quaternary structure, homodimer. Mg(2+) is required as a cofactor.

It is found in the cytoplasm. The enzyme catalyses tRNA(Lys) + L-lysine + ATP = L-lysyl-tRNA(Lys) + AMP + diphosphate. This Lactiplantibacillus plantarum (strain ATCC BAA-793 / NCIMB 8826 / WCFS1) (Lactobacillus plantarum) protein is Lysine--tRNA ligase.